Consider the following 372-residue polypeptide: Glutamate 5-kinase (372 aa).

Position 14 (lysine 14) interacts with ATP. Substrate is bound by residues serine 54, aspartate 141, and asparagine 153. 173–174 provides a ligand contact to ATP; that stretch reads TD. A PUA domain is found at 280–358; the sequence is RGTLVLDDGA…ESIVRELGYM (79 aa).

It belongs to the glutamate 5-kinase family.

Its subcellular location is the cytoplasm. The catalysed reaction is L-glutamate + ATP = L-glutamyl 5-phosphate + ADP. It participates in amino-acid biosynthesis; L-proline biosynthesis; L-glutamate 5-semialdehyde from L-glutamate: step 1/2. Functionally, catalyzes the transfer of a phosphate group to glutamate to form L-glutamate 5-phosphate. This chain is Glutamate 5-kinase, found in Pseudomonas syringae pv. syringae (strain B728a).